Reading from the N-terminus, the 215-residue chain is Kunitz trypsin inhibitor 2 (215 aa).

An N-terminal signal peptide occupies residues 1-23 (MKNPSVISFLIILLFAATICTHG). A disulfide bridge connects residues Cys-67 and Cys-114. A glycan (N-linked (GlcNAc...) asparagine) is linked at Asn-145.

This sequence belongs to the protease inhibitor I3 (leguminous Kunitz-type inhibitor) family. Interacts with RD21A. Interacts with RD21B and RD21C. Expressed in vascular bundles of the carpels, the transmitting tract of the style and septum epidermis. Expressed in etiolated seedlings.

It localises to the secreted. The protein localises to the cell wall. It is found in the extracellular space. Its subcellular location is the apoplast. The protein resides in the endoplasmic reticulum. Its function is as follows. Water-soluble and chlorophyll-binding protein that probably does not function as a chloroplast chlorophyll carrier and is not involved in photosynthesis. Involved in the control of cell death in the transmitting tract and septum epidermis during flower development. Binds and inhibits the activity of the cysteine protease RD21A as a pro-death protein. May play a role in herbivore resistance activation during seedling greening. This chain is Kunitz trypsin inhibitor 2, found in Arabidopsis thaliana (Mouse-ear cress).